The chain runs to 431 residues: Histidinol dehydrogenase 1 (431 aa).

Residues tyrosine 127, glutamine 188, and asparagine 211 each contribute to the NAD(+) site. Substrate contacts are provided by serine 234, glutamine 256, and histidine 259. 2 residues coordinate Zn(2+): glutamine 256 and histidine 259. Residues glutamate 324 and histidine 325 each act as proton acceptor in the active site. Positions 325, 358, 412, and 417 each coordinate substrate. Aspartate 358 lines the Zn(2+) pocket. Histidine 417 is a Zn(2+) binding site.

This sequence belongs to the histidinol dehydrogenase family. Zn(2+) is required as a cofactor.

The enzyme catalyses L-histidinol + 2 NAD(+) + H2O = L-histidine + 2 NADH + 3 H(+). Its pathway is amino-acid biosynthesis; L-histidine biosynthesis; L-histidine from 5-phospho-alpha-D-ribose 1-diphosphate: step 9/9. In terms of biological role, catalyzes the sequential NAD-dependent oxidations of L-histidinol to L-histidinaldehyde and then to L-histidine. The protein is Histidinol dehydrogenase 1 of Trichormus variabilis (strain ATCC 29413 / PCC 7937) (Anabaena variabilis).